A 249-amino-acid chain; its full sequence is 4-hydroxy-tetrahydrodipicolinate reductase (249 aa).

NAD(+) contacts are provided by residues D32, 74-76 (GTT), and 99-102 (SANY). H134 serves as the catalytic Proton donor/acceptor. H135 provides a ligand contact to (S)-2,3,4,5-tetrahydrodipicolinate. The Proton donor role is filled by K138. 144–145 (GT) is a (S)-2,3,4,5-tetrahydrodipicolinate binding site.

The protein belongs to the DapB family.

The protein localises to the cytoplasm. The enzyme catalyses (S)-2,3,4,5-tetrahydrodipicolinate + NAD(+) + H2O = (2S,4S)-4-hydroxy-2,3,4,5-tetrahydrodipicolinate + NADH + H(+). It catalyses the reaction (S)-2,3,4,5-tetrahydrodipicolinate + NADP(+) + H2O = (2S,4S)-4-hydroxy-2,3,4,5-tetrahydrodipicolinate + NADPH + H(+). The protein operates within amino-acid biosynthesis; L-lysine biosynthesis via DAP pathway; (S)-tetrahydrodipicolinate from L-aspartate: step 4/4. Its function is as follows. Catalyzes the conversion of 4-hydroxy-tetrahydrodipicolinate (HTPA) to tetrahydrodipicolinate. The polypeptide is 4-hydroxy-tetrahydrodipicolinate reductase (Chlorobaculum tepidum (strain ATCC 49652 / DSM 12025 / NBRC 103806 / TLS) (Chlorobium tepidum)).